The chain runs to 334 residues: Protein-methionine-sulfoxide reductase catalytic subunit MsrP (334 aa).

Positions 1 to 44 (MKKNQFLKESDVTAESVFFMKRRQVLKALGISATALSLPHAAHA) form a signal peptide, tat-type signal. Mo-molybdopterin is bound by residues Asn88, 91–92 (YE), Cys146, Thr181, Asn233, Arg238, and 249–251 (GIK).

This sequence belongs to the MsrP family. As to quaternary structure, heterodimer of a catalytic subunit (MsrP) and a heme-binding subunit (MsrQ). Mo-molybdopterin is required as a cofactor. Post-translationally, exported by the Tat system. Can also be exported by the Sec system.

Its subcellular location is the periplasm. It carries out the reaction L-methionyl-[protein] + a quinone + H2O = L-methionyl-(S)-S-oxide-[protein] + a quinol. It catalyses the reaction L-methionyl-[protein] + a quinone + H2O = L-methionyl-(R)-S-oxide-[protein] + a quinol. In terms of biological role, part of the MsrPQ system that repairs oxidized periplasmic proteins containing methionine sulfoxide residues (Met-O), using respiratory chain electrons. Thus protects these proteins from oxidative-stress damage caused by reactive species of oxygen and chlorine. MsrPQ is essential for the maintenance of envelope integrity under bleach stress, rescuing a wide series of structurally unrelated periplasmic proteins from methionine oxidation, including the primary periplasmic chaperone SurA and the lipoprotein Pal. The catalytic subunit MsrP is non-stereospecific, being able to reduce both (R-) and (S-) diastereoisomers of methionine sulfoxide. Can catalyze the reduction of a variety of substrates in vitro, including dimethyl sulfoxide, trimethylamine N-oxide, phenylmethyl sulfoxide and L-methionine sulfoxide. Cannot reduce cyclic N-oxides. Shows no activity as sulfite oxidase. The chain is Protein-methionine-sulfoxide reductase catalytic subunit MsrP from Escherichia coli (strain K12).